The sequence spans 735 residues: Protein PAT1 homolog 2 (735 aa).

Disordered stretches follow at residues 39 to 93 (TFGL…REVK) and 336 to 366 (QLHP…PDPY). Composition is skewed to basic and acidic residues over residues 49 to 59 (EPTKQEEDHKK) and 67 to 93 (PKIE…REVK). The segment covering 346-356 (SQRQRPQSSSR) has biased composition (low complexity).

This sequence belongs to the PAT1 family. As to quaternary structure, interacts with ribonucleoprotein complex components. Interacts with cpeb.

The protein localises to the cytoplasm. It localises to the nucleus. RNA-binding protein that acts as a translational repressor. This is Protein PAT1 homolog 2 (patl2) from Xenopus tropicalis (Western clawed frog).